The sequence spans 160 residues: Cytochrome b6-f complex subunit 4 (160 aa).

3 consecutive transmembrane segments (helical) span residues 36-56 (LLYT…GLAV), 95-115 (LLGV…PFIE), and 131-151 (TVFL…TLPI).

This sequence belongs to the cytochrome b family. PetD subfamily. In terms of assembly, the 4 large subunits of the cytochrome b6-f complex are cytochrome b6, subunit IV (17 kDa polypeptide, petD), cytochrome f and the Rieske protein, while the 4 small subunits are petG, petL, petM and petN. The complex functions as a dimer.

It localises to the plastid. The protein resides in the chloroplast thylakoid membrane. Its function is as follows. Component of the cytochrome b6-f complex, which mediates electron transfer between photosystem II (PSII) and photosystem I (PSI), cyclic electron flow around PSI, and state transitions. The chain is Cytochrome b6-f complex subunit 4 from Mesostigma viride (Green alga).